A 524-amino-acid polypeptide reads, in one-letter code: Apoptosis inhibitor 5-A (524 aa).

Residues 1–360 (MATVEELYRS…HQLGRKLPDF (360 aa)) form an ARM-like and Heat-like helical repeats region. Residues 440-524 (TLSWKPVQRT…RGNRSRGRIY (85 aa)) form a disordered region. The Nuclear localization signal motif lies at 455 to 476 (KRTSDETSSTSPPKKPIVGPKR). Residues 503 to 516 (GFQGGRGRGWGGRG) show a composition bias toward gly residues.

This sequence belongs to the API5 family. Monomer.

Its subcellular location is the nucleus. Its function is as follows. May be an antiapoptotic factor. The chain is Apoptosis inhibitor 5-A (api5-a) from Xenopus laevis (African clawed frog).